A 110-amino-acid polypeptide reads, in one-letter code: ATP synthase epsilon chain (110 aa).

It belongs to the ATPase epsilon chain family. F-type ATPases have 2 components, CF(1) - the catalytic core - and CF(0) - the membrane proton channel. CF(1) has five subunits: alpha(3), beta(3), gamma(1), delta(1), epsilon(1). CF(0) has three main subunits: a, b and c.

It is found in the cell inner membrane. Produces ATP from ADP in the presence of a proton gradient across the membrane. The sequence is that of ATP synthase epsilon chain from Rickettsia typhi (strain ATCC VR-144 / Wilmington).